The sequence spans 570 residues: Multidrug and toxin extrusion protein 1 (570 aa).

At methionine 1 the chain carries N-acetylmethionine. The Cytoplasmic segment spans residues 1–37; that stretch reads MEAPEEPAPVRGGPEATLEVRGSRCLRLSAFREELRA. Residues 38-58 form a helical membrane-spanning segment; the sequence is LLVLAGPAFLVQLMVFLISFI. At 59–72 the chain is on the extracellular side; the sequence is SSVFCGHLGKLELD. A helical membrane pass occupies residues 73-93; that stretch reads AVTLAIAVINVTGVSVGFGLS. The Cytoplasmic portion of the chain corresponds to 94 to 123; that stretch reads SACDTLISQTYGSQNLKHVGVILQRSALVL. Residues 124 to 144 form a helical membrane-spanning segment; it reads LLCCFPCWALFLNTQHILLLF. At 145-152 the chain is on the extracellular side; that stretch reads RQDPDVSR. The chain crosses the membrane as a helical span at residues 153–173; that stretch reads LTQTYVTIFIPALPATFLYML. The Cytoplasmic segment spans residues 174–176; the sequence is QVK. Residues 177-197 traverse the membrane as a helical segment; the sequence is YLLNQGIVLPQIVTGVAANLV. The Extracellular portion of the chain corresponds to 198–216; sequence NALANYLFLHQLHLGVIGS. The helical transmembrane segment at 217–237 threads the bilayer; that stretch reads ALANLISQYTLALLLFLYILG. Over 238 to 256 the chain is Cytoplasmic; the sequence is KKLHQATWGGWSLECLQDW. A helical membrane pass occupies residues 257–276; the sequence is ASFLRLAIPSMLMLCMEWWA. Over 277 to 295 the chain is Extracellular; sequence YEVGSFLSGILGMVELGAQ. The chain crosses the membrane as a helical span at residues 296–316; sequence SIVYELAIIVYMVPAGFSVAA. The Cytoplasmic portion of the chain corresponds to 317–336; the sequence is SVRVGNALGAGDMEQARKSS. The helical transmembrane segment at 337-357 threads the bilayer; sequence TVSLLITVLFAVAFSVLLLSC. The Extracellular portion of the chain corresponds to 358–370; the sequence is KDHVGYIFTTDRD. A helical membrane pass occupies residues 371 to 391; sequence IINLVAQVVPIYAVSHLFEAL. The Cytoplasmic segment spans residues 392–408; the sequence is ACTSGGVLRGSGNQKVG. A helical membrane pass occupies residues 409–429; that stretch reads AIVNTIGYYVVGLPIGIALMF. Over 430–437 the chain is Extracellular; sequence ATTLGVMG. The helical transmembrane segment at 438–458 threads the bilayer; the sequence is LWSGIIICTVFQAVCFLGFII. Residues 459-546 are Cytoplasmic-facing; it reads QLNWKKACQQ…LSRKQLVLRR (88 aa). Residues 508 to 534 are disordered; the sequence is DVGKTGEPQSDQQMRQEEPLPEHPQDG. The segment covering 521–533 has biased composition (basic and acidic residues); that stretch reads MRQEEPLPEHPQD. A helical membrane pass occupies residues 547-567; sequence GLLLLGVFLILLVGILVRFYV. Topologically, residues 568 to 570 are extracellular; that stretch reads RIQ.

Belongs to the multi antimicrobial extrusion (MATE) (TC 2.A.66.1) family. As to expression, widely expressed. The highest expression is found in adrenal gland, and to a lower extent in liver, skeletal muscle and kidney. In testis, primarily localized throughout the adluminal compartment of the seminiferous tubules with expression at the peritubular myoid cells and Leydig cells.

The protein localises to the cell membrane. It localises to the apical cell membrane. It carries out the reaction thiamine(out) + H(+)(in) = thiamine(in) + H(+)(out). The catalysed reaction is estrone 3-sulfate(in) + H(+)(out) = estrone 3-sulfate(out) + H(+)(in). It catalyses the reaction creatinine(in) + H(+)(out) = creatinine(out) + H(+)(in). The enzyme catalyses agmatine(in) + H(+)(out) = agmatine(out) + H(+)(in). Functionally, multidrug efflux pump that functions as a H(+)/organic cation antiporter. Plays a physiological role in the excretion of cationic compounds including endogenous metabolites, drugs, toxins through the kidney and liver, into urine and bile respectively. Mediates the efflux of endogenous compounds such as creatinine, vitamin B1/thiamine, agmatine and estrone-3-sulfate. May also contribute to regulate the transport of cationic compounds in testis across the blood-testis-barrier. The polypeptide is Multidrug and toxin extrusion protein 1 (Homo sapiens (Human)).